The following is a 468-amino-acid chain: Dimethylamine methyltransferase MtbB2 (468 aa).

O356 is a non-standard amino acid (pyrrolysine).

This sequence belongs to the dimethylamine methyltransferase family.

It carries out the reaction Co(I)-[dimethylamine-specific corrinoid protein] + dimethylamine + H(+) = methyl-Co(III)-[dimethylamine-specific corrinoid protein] + methylamine. The protein operates within one-carbon metabolism; methanogenesis from dimethylamine. Catalyzes the transfer of a methyl group from dimethylamine to the corrinoid cofactor of MtbC. The chain is Dimethylamine methyltransferase MtbB2 (mtbB2) from Methanosarcina acetivorans (strain ATCC 35395 / DSM 2834 / JCM 12185 / C2A).